A 263-amino-acid chain; its full sequence is Endonuclease 8 (263 aa).

The active-site Schiff-base intermediate with DNA is Pro2. The active-site Proton donor is the Glu3. The Proton donor; for beta-elimination activity role is filled by Lys53. The DNA site is built by Gln70, Arg125, and Asn169. The FPG-type zinc finger occupies 229–263 (KVFHRDGEPCERCGGIIEKTTLSSRPFYWCPGCQH). The Proton donor; for delta-elimination activity role is filled by Arg253.

The protein belongs to the FPG family. The cofactor is Zn(2+).

It catalyses the reaction 2'-deoxyribonucleotide-(2'-deoxyribose 5'-phosphate)-2'-deoxyribonucleotide-DNA = a 3'-end 2'-deoxyribonucleotide-(2,3-dehydro-2,3-deoxyribose 5'-phosphate)-DNA + a 5'-end 5'-phospho-2'-deoxyribonucleoside-DNA + H(+). Involved in base excision repair of DNA damaged by oxidation or by mutagenic agents. Acts as a DNA glycosylase that recognizes and removes damaged bases. Has a preference for oxidized pyrimidines, such as thymine glycol, 5,6-dihydrouracil and 5,6-dihydrothymine. Has AP (apurinic/apyrimidinic) lyase activity and introduces nicks in the DNA strand. Cleaves the DNA backbone by beta-delta elimination to generate a single-strand break at the site of the removed base with both 3'- and 5'-phosphates. The polypeptide is Endonuclease 8 (Escherichia coli (strain UTI89 / UPEC)).